The sequence spans 691 residues: Pentatricopeptide repeat-containing protein At5g27110 (691 aa).

PPR repeat units lie at residues 38–68, 70–104, 106–140, 141–171, 172–206, 207–241, 242–272, 273–307, 308–342, 343–373, 374–408, 409–443, 444–474, 475–509, 510–540, and 546–576; these read DVVL…FDIR, DVYI…SICV, DSFT…GYVC, DVVV…MPER, DVAS…GFEP, NSVS…GFEL, DEYV…MPRK, SLVA…GTRP, SQTT…VVNA, DIYV…TQKD, VAES…GVKP, DVVT…RLET, DELL…IPKK, DVVS…GLKP, DGVT…MRSK, and IIEH…TPET. A type E motif region spans residues 582–657; it reads LLSTLFSACC…KPGCSWIEMS (76 aa). The tract at residues 658-688 is type E(+) motif; that stretch reads DKVCHFFAEDRSHLRAENVYECLALLSGHME.

The protein belongs to the PPR family. PCMP-E subfamily.

The chain is Pentatricopeptide repeat-containing protein At5g27110 (PCMP-E14) from Arabidopsis thaliana (Mouse-ear cress).